The sequence spans 84 residues: Acyl carrier protein homolog (84 aa).

Residues 4–79 (RDILLKIKEI…ELIAEVKHLI (76 aa)) enclose the Carrier domain. An O-(pantetheine 4'-phosphoryl)serine modification is found at serine 39.

In terms of processing, 4'-phosphopantetheine is transferred from CoA to a specific serine of the apo-ACP-like protein.

The protein operates within lipid metabolism; fatty acid biosynthesis. Functionally, carrier of the growing fatty acid chain in fatty acid biosynthesis. The chain is Acyl carrier protein homolog from Mycoplasma pneumoniae (strain ATCC 29342 / M129 / Subtype 1) (Mycoplasmoides pneumoniae).